Reading from the N-terminus, the 1651-residue chain is Vitellogenin-6 (1651 aa).

Positions 1–15 (MKFFIALALLGAALA) are cleaved as a signal peptide. The Vitellogenin domain occupies 34-716 (FRAGREYRYL…TTESVLPTEM (683 aa)). N-linked (GlcNAc...) asparagine glycosylation is found at N252 and N1288. Residues 1340-1515 (ANCVVKSTKI…SYLYKDSKCN (176 aa)) form the VWFD domain. 2 cysteine pairs are disulfide-bonded: C1342–C1479 and C1364–C1514. Residues 1527-1556 (FQRIEKNQEEEKDQEMNYEESRREQDDEPT) are disordered.

As to expression, synthesized in Caenorhabditis only by 32 cells building the intestine of adult hermaphroditic individuals; they are cotranslationally secreted into the body cavity and subsequently taken up by the gonad.

Its subcellular location is the secreted. Its function is as follows. Precursor of the egg-yolk proteins that are sources of nutrients during embryonic development. May play a role in cholesterol uptake. May be involved in thermotolerance. This is Vitellogenin-6 (vit-6) from Caenorhabditis elegans.